The chain runs to 75 residues: uncharacterized protein (75 aa).

The segment covering Phe19 to Gln38 has biased composition (polar residues). A disordered region spans residues Phe19–Lys42. Residues Leu47–Gln66 traverse the membrane as a helical segment.

It localises to the membrane. This is an uncharacterized protein from Saccharomyces cerevisiae (strain ATCC 204508 / S288c) (Baker's yeast).